A 495-amino-acid chain; its full sequence is UDP-N-acetylmuramoyl-L-alanyl-D-glutamate--2,6-diaminopimelate ligase (495 aa).

Serine 29 is a UDP-N-acetyl-alpha-D-muramoyl-L-alanyl-D-glutamate binding site. ATP is bound at residue 111–117; it reads GTNGKTS. Residues 153 to 154, serine 180, glutamine 186, and arginine 188 each bind UDP-N-acetyl-alpha-D-muramoyl-L-alanyl-D-glutamate; that span reads TT. Lysine 220 carries the N6-carboxylysine modification. Residues arginine 384, 408–411, glycine 459, and glutamate 463 contribute to the meso-2,6-diaminopimelate site; that span reads DNPR. The Meso-diaminopimelate recognition motif signature appears at 408 to 411; sequence DNPR.

Belongs to the MurCDEF family. MurE subfamily. It depends on Mg(2+) as a cofactor. Carboxylation is probably crucial for Mg(2+) binding and, consequently, for the gamma-phosphate positioning of ATP.

It localises to the cytoplasm. The catalysed reaction is UDP-N-acetyl-alpha-D-muramoyl-L-alanyl-D-glutamate + meso-2,6-diaminopimelate + ATP = UDP-N-acetyl-alpha-D-muramoyl-L-alanyl-gamma-D-glutamyl-meso-2,6-diaminopimelate + ADP + phosphate + H(+). The protein operates within cell wall biogenesis; peptidoglycan biosynthesis. Its function is as follows. Catalyzes the addition of meso-diaminopimelic acid to the nucleotide precursor UDP-N-acetylmuramoyl-L-alanyl-D-glutamate (UMAG) in the biosynthesis of bacterial cell-wall peptidoglycan. In Xylella fastidiosa (strain 9a5c), this protein is UDP-N-acetylmuramoyl-L-alanyl-D-glutamate--2,6-diaminopimelate ligase.